Here is a 200-residue protein sequence, read N- to C-terminus: Holliday junction branch migration complex subunit RuvA (200 aa).

The interval 1–63 (MYAYIKGTLS…EDAQLLYGFI (63 aa)) is domain I. The tract at residues 64 to 142 (NEEEKEMFLS…ITEENSDDLL (79 aa)) is domain II. The interval 143 to 149 (QTQVNGN) is flexible linker. Residues 150 to 200 (EQNQIISEALLALQALGYSKRELTKVEKSLNKHNVNSVDEAVKIGLQTLVS) form a domain III region.

The protein belongs to the RuvA family. Homotetramer. Forms an RuvA(8)-RuvB(12)-Holliday junction (HJ) complex. HJ DNA is sandwiched between 2 RuvA tetramers; dsDNA enters through RuvA and exits via RuvB. An RuvB hexamer assembles on each DNA strand where it exits the tetramer. Each RuvB hexamer is contacted by two RuvA subunits (via domain III) on 2 adjacent RuvB subunits; this complex drives branch migration. In the full resolvosome a probable DNA-RuvA(4)-RuvB(12)-RuvC(2) complex forms which resolves the HJ.

The protein resides in the cytoplasm. The RuvA-RuvB-RuvC complex processes Holliday junction (HJ) DNA during genetic recombination and DNA repair, while the RuvA-RuvB complex plays an important role in the rescue of blocked DNA replication forks via replication fork reversal (RFR). RuvA specifically binds to HJ cruciform DNA, conferring on it an open structure. The RuvB hexamer acts as an ATP-dependent pump, pulling dsDNA into and through the RuvAB complex. HJ branch migration allows RuvC to scan DNA until it finds its consensus sequence, where it cleaves and resolves the cruciform DNA. This chain is Holliday junction branch migration complex subunit RuvA, found in Staphylococcus epidermidis (strain ATCC 35984 / DSM 28319 / BCRC 17069 / CCUG 31568 / BM 3577 / RP62A).